Here is a 511-residue protein sequence, read N- to C-terminus: Arginine-containing cyclodipeptide synthase eshA (511 aa).

Residues 413 to 417 (DDSAE) carry the Conserved DDXXE motif motif.

The protein belongs to the arginine-containing cyclodipeptide synthase family.

It carries out the reaction L-arginyl-tRNA(Arg) + L-leucyl-tRNA(Leu) = cyclo(L-arginyl-L-leucyl) + tRNA(Arg) + tRNA(Leu) + 2 H(+). It participates in secondary metabolite biosynthesis. Its function is as follows. Arginine-containing cyclodipeptide synthase; part of the cluster that mediates the biosynthesis of a highly modified cyclo-arginine-leucine dipeptide (cRW). Within the pathway, eshA acts as the scaffold-generating enzyme and is responsible for formation of the cyclo-Arg-Leu diketopiperazine (cRL) from L-arginyl-tRNA(Arg) + L-Leucyl-tRNA(Leu). Additional enzymes from the cluster then further modify the cyclo-Arg-Leu diketopiperazine (cRW) scaffold. The polypeptide is Arginine-containing cyclodipeptide synthase eshA (Penicillium shearii (Eupenicillium shearii)).